We begin with the raw amino-acid sequence, 299 residues long: Taste receptor type 2 member 5 (299 aa).

Methionine 1 is a topological domain (extracellular). Residues 2–22 (LSAGLGLLMLVAVVEFLIGLI) form a helical membrane-spanning segment. Residues 23–45 (GNGVLVVWSFREWMRKFNWSSYN) lie on the Cytoplasmic side of the membrane. A helical transmembrane segment spans residues 46–66 (LIILGLAGCRFLLQWLIILDL). Residues 67–82 (SLFPLFQSSRWLRYLS) are Extracellular-facing. A helical membrane pass occupies residues 83–103 (IFWVLVSQASLWFATFLSVFY). The Cytoplasmic segment spans residues 104–127 (CKKITTFDRPAYLWLKQRAYNLSL). The helical transmembrane segment at 128–148 (WCLLGYFIINLLLTVQIGLMF) threads the bilayer. The Extracellular segment spans residues 149 to 175 (YHPPQGNSSIRYPFESWQYLYAFRLNS). Asparagine 155 carries N-linked (GlcNAc...) asparagine glycosylation. The chain crosses the membrane as a helical span at residues 176–196 (GSYLPLMVFLVSSGMLIVSLY). The Cytoplasmic portion of the chain corresponds to 197–223 (THHKKMKVHSAGRRDVRAKAHITALKS). The chain crosses the membrane as a helical span at residues 224-244 (LGCFLFLHLVYIMASPFSITS). Residues 245-253 (KTYPPDLTS) lie on the Extracellular side of the membrane. The helical transmembrane segment at 254–274 (VFIWETLMAAYPSLHSLILIM) threads the bilayer. Residues 275 to 299 (GIPRVKQTCQKILWKTVCARRCWGP) lie on the Cytoplasmic side of the membrane.

Belongs to the G-protein coupled receptor T2R family.

It localises to the membrane. In terms of biological role, receptor that may play a role in the perception of bitterness and is gustducin-linked. May play a role in sensing the chemical composition of the gastrointestinal content. The activity of this receptor may stimulate alpha gustducin, mediate PLC-beta-2 activation and lead to the gating of TRPM5. The protein is Taste receptor type 2 member 5 (TAS2R5) of Gorilla gorilla gorilla (Western lowland gorilla).